The following is a 179-amino-acid chain: Large ribosomal subunit protein uL5 (179 aa).

Belongs to the universal ribosomal protein uL5 family. Part of the 50S ribosomal subunit; part of the 5S rRNA/L5/L18/L25 subcomplex. Contacts the 5S rRNA and the P site tRNA. Forms a bridge to the 30S subunit in the 70S ribosome.

In terms of biological role, this is one of the proteins that bind and probably mediate the attachment of the 5S RNA into the large ribosomal subunit, where it forms part of the central protuberance. In the 70S ribosome it contacts protein S13 of the 30S subunit (bridge B1b), connecting the 2 subunits; this bridge is implicated in subunit movement. Contacts the P site tRNA; the 5S rRNA and some of its associated proteins might help stabilize positioning of ribosome-bound tRNAs. The sequence is that of Large ribosomal subunit protein uL5 from Pseudomonas aeruginosa (strain LESB58).